Consider the following 316-residue polypeptide: 4-hydroxyphenylacetate decarboxylase activating enzyme (316 aa).

The region spanning 20–307 is the Radical SAM core domain; the sequence is HDGPGCRTTV…QDIFLDNGIA (288 aa). Cys-34, Cys-38, Cys-41, Cys-60, Cys-66, Cys-69, and Cys-105 together coordinate [4Fe-4S] cluster. An S-adenosyl-L-methionine-binding site is contributed by 40-42; that stretch reads WCA. The 4Fe-4S ferredoxin-type domain maps to 84-115; sequence NKPVIDWNICKDCESFECVNSCYYNAFKLCAK. S-adenosyl-L-methionine is bound by residues Gly-144, 193 to 195, and His-267; that span reads DIK.

The protein belongs to the organic radical-activating enzymes family. In terms of assembly, monomer. [4Fe-4S] cluster serves as cofactor.

It catalyses the reaction glycyl-[protein] + reduced [flavodoxin] + S-adenosyl-L-methionine = glycin-2-yl radical-[protein] + semiquinone [flavodoxin] + 5'-deoxyadenosine + L-methionine + H(+). Functionally, catalyzes activation of 4-hydroxyphenylacetate decarboxylase under anaerobic conditions by generation of an organic free radical on a glycine residue, via a homolytic cleavage of S-adenosyl-L-methionine (SAM). This chain is 4-hydroxyphenylacetate decarboxylase activating enzyme, found in Clostridioides difficile (strain CD196) (Peptoclostridium difficile).